The primary structure comprises 141 residues: Hemoglobin subunit alpha (141 aa).

Positions 1–141 constitute a Globin domain; that stretch reads VLSDKDKTNV…VSTVLTSKYR (141 aa). Ser-3 carries the phosphoserine modification. N6-succinyllysine is present on Lys-7. Thr-8 bears the Phosphothreonine mark. Lys-11 is modified (N6-succinyllysine). Position 16 is an N6-acetyllysine; alternate (Lys-16). Residue Lys-16 is modified to N6-succinyllysine; alternate. Tyr-24 is subject to Phosphotyrosine. Ser-35 carries the post-translational modification Phosphoserine. Lys-40 is subject to N6-succinyllysine. Phosphoserine is present on Ser-49. His-58 contacts O2. His-87 is a binding site for heme b. Ser-102 is modified (phosphoserine). Thr-108 bears the Phosphothreonine mark. Phosphoserine is present on Ser-124. 2 positions are modified to phosphothreonine: Thr-134 and Thr-137. At Ser-138 the chain carries Phosphoserine.

Belongs to the globin family. In terms of assembly, heterotetramer of two alpha chains and two beta chains. As to expression, red blood cells.

Its function is as follows. Involved in oxygen transport from the lung to the various peripheral tissues. In terms of biological role, hemopressin acts as an antagonist peptide of the cannabinoid receptor CNR1. Hemopressin-binding efficiently blocks cannabinoid receptor CNR1 and subsequent signaling. The chain is Hemoglobin subunit alpha (HBA) from Elephas maximus (Indian elephant).